The primary structure comprises 308 residues: Protoheme IX farnesyltransferase (308 aa).

Helical transmembrane passes span 20–40 (LLAY…VTAI), 50–70 (AIHP…AAGA), 102–122 (NALA…WCAT), 124–144 (LLAG…YTLW), 149–169 (TSQN…IGWS), 170–190 (AITG…FFWT), 227–249 (LIYT…WLYG), and 288–308 (YLAV…PTLH).

This sequence belongs to the UbiA prenyltransferase family. Protoheme IX farnesyltransferase subfamily.

It localises to the cell membrane. It catalyses the reaction heme b + (2E,6E)-farnesyl diphosphate + H2O = Fe(II)-heme o + diphosphate. It functions in the pathway porphyrin-containing compound metabolism; heme O biosynthesis; heme O from protoheme: step 1/1. Converts heme B (protoheme IX) to heme O by substitution of the vinyl group on carbon 2 of heme B porphyrin ring with a hydroxyethyl farnesyl side group. In Mycobacterium tuberculosis (strain ATCC 25618 / H37Rv), this protein is Protoheme IX farnesyltransferase.